The following is a 243-amino-acid chain: 1-(5-phosphoribosyl)-5-[(5-phosphoribosylamino)methylideneamino] imidazole-4-carboxamide isomerase (243 aa).

Residue D8 is the Proton acceptor of the active site. D129 functions as the Proton donor in the catalytic mechanism.

The protein belongs to the HisA/HisF family.

The protein localises to the cytoplasm. The catalysed reaction is 1-(5-phospho-beta-D-ribosyl)-5-[(5-phospho-beta-D-ribosylamino)methylideneamino]imidazole-4-carboxamide = 5-[(5-phospho-1-deoxy-D-ribulos-1-ylimino)methylamino]-1-(5-phospho-beta-D-ribosyl)imidazole-4-carboxamide. Its pathway is amino-acid biosynthesis; L-histidine biosynthesis; L-histidine from 5-phospho-alpha-D-ribose 1-diphosphate: step 4/9. This chain is 1-(5-phosphoribosyl)-5-[(5-phosphoribosylamino)methylideneamino] imidazole-4-carboxamide isomerase, found in Citrifermentans bemidjiense (strain ATCC BAA-1014 / DSM 16622 / JCM 12645 / Bem) (Geobacter bemidjiensis).